The chain runs to 68 residues: Large ribosomal subunit protein bL32 (68 aa).

The interval 1–21 (MAVQQNKVSKSRRNNRRAHDS) is disordered.

It belongs to the bacterial ribosomal protein bL32 family.

This chain is Large ribosomal subunit protein bL32, found in Roseobacter denitrificans (strain ATCC 33942 / OCh 114) (Erythrobacter sp. (strain OCh 114)).